The sequence spans 128 residues: Sulfurtransferase TusD (128 aa).

Cysteine 78 (cysteine persulfide intermediate) is an active-site residue.

Belongs to the DsrE/TusD family. Heterohexamer, formed by a dimer of trimers. The hexameric TusBCD complex contains 2 copies each of TusB, TusC and TusD. The TusBCD complex interacts with TusE.

The protein resides in the cytoplasm. Functionally, part of a sulfur-relay system required for 2-thiolation of 5-methylaminomethyl-2-thiouridine (mnm(5)s(2)U) at tRNA wobble positions. Accepts sulfur from TusA and transfers it in turn to TusE. This Escherichia coli (strain K12 / MC4100 / BW2952) protein is Sulfurtransferase TusD.